Reading from the N-terminus, the 183-residue chain is MGNIFSSMFDKLWGSNKELRILILGLDGAGKTTILYRLQIGEVVTTKPTIGFNVETLSYKNLKLNVWDLGGQTSIRPYWRCYYADTAAVIFVVDSTDKDRMSTASKELHLMLQEEELQDAALLVFANKQDQPGALSASEVSKELNLVELKDRSWSIVASSAIKGEGITEGLDWLIDVIKEEQL.

The N-myristoyl glycine moiety is linked to residue Gly-2. GTP contacts are provided by residues 25–32, 68–72, and 127–130; these read GLDGAGKT, DLGGQ, and NKQD.

This sequence belongs to the small GTPase superfamily. Arf family. As to quaternary structure, homodimer. Interacts with IMH1 (via GRIP domain); the interaction is dependent on GTP. Interacts with MON2.

The protein localises to the golgi apparatus. Recruits golgins such as IMH1 to the Golgi. Can bind and hydrolyze GTP. May be involved in trafficking events within the endosomal system. The sequence is that of ADP-ribosylation factor-like protein 1 (ARL1) from Saccharomyces cerevisiae (strain ATCC 204508 / S288c) (Baker's yeast).